The following is a 296-amino-acid chain: tRNA pseudouridine synthase B (296 aa).

The Nucleophile role is filled by Asp-38.

This sequence belongs to the pseudouridine synthase TruB family. Type 1 subfamily.

It carries out the reaction uridine(55) in tRNA = pseudouridine(55) in tRNA. Its function is as follows. Responsible for synthesis of pseudouridine from uracil-55 in the psi GC loop of transfer RNAs. The chain is tRNA pseudouridine synthase B from Ehrlichia chaffeensis (strain ATCC CRL-10679 / Arkansas).